A 1108-amino-acid chain; its full sequence is Retinal guanylyl cyclase 2 (1108 aa).

The signal sequence occupies residues 1–50 (MFLGPWPFSRLLSWFAISSRLSGQHGLTSSKFLRYLCLLALLPLIWWGQA). Topologically, residues 51 to 465 (LPYKIGVIGP…QGKICQGGID (415 aa)) are extracellular. A disulfide bond links C104 and C132. A helical membrane pass occupies residues 466 to 490 (PALAMMVCFALLLALLSINGFAYFI). The Cytoplasmic portion of the chain corresponds to 491–1108 (RRRINKIQLI…AERQLVRNKP (618 aa)). The Protein kinase domain maps to 532-812 (FQIISEVQSG…DEIFNQFKTF (281 aa)). The Guanylate cyclase domain maps to 884 to 1014 (TLYFSDIVGF…DTVNTASRME (131 aa)).

Belongs to the adenylyl cyclase class-4/guanylyl cyclase family. In terms of assembly, homodimer. Interacts with RD3; promotes the exit of GUCY2F from the endoplasmic reticulum and its trafficking to the photoreceptor outer segments. Post-translationally, there are 9 conserved cysteine residues in sensory guanylate cyclases, 6 in the extracellular domain, which may be involved in intra- or interchain disulfide bonds. In terms of tissue distribution, expressed only in the eye.

Its subcellular location is the membrane. It is found in the photoreceptor outer segment membrane. The catalysed reaction is GTP = 3',5'-cyclic GMP + diphosphate. Its activity is regulated as follows. Activated by GUCA1B when free calcium ions concentration is low, and inhibited by GUCA1B when free calcium ions concentration is high. Inhibited by RD3. Responsible for the synthesis of cyclic GMP (cGMP) in rods and cones of photoreceptors. Plays an essential role in phototransduction, by mediating cGMP replenishment. May also participate in the trafficking of membrane-asociated proteins to the photoreceptor outer segment membrane. This chain is Retinal guanylyl cyclase 2 (Gucy2f), found in Rattus norvegicus (Rat).